The chain runs to 264 residues: Thymidylate synthase (264 aa).

R21 is a dUMP binding site. H51 provides a ligand contact to (6R)-5,10-methylene-5,6,7,8-tetrahydrofolate. 126 to 127 provides a ligand contact to dUMP; that stretch reads RR. C146 (nucleophile) is an active-site residue. DUMP is bound by residues 166 to 169, N177, and 207 to 209; these read RSAD and HIY. D169 contacts (6R)-5,10-methylene-5,6,7,8-tetrahydrofolate. A263 lines the (6R)-5,10-methylene-5,6,7,8-tetrahydrofolate pocket.

The protein belongs to the thymidylate synthase family. Bacterial-type ThyA subfamily. As to quaternary structure, homodimer.

Its subcellular location is the cytoplasm. The enzyme catalyses dUMP + (6R)-5,10-methylene-5,6,7,8-tetrahydrofolate = 7,8-dihydrofolate + dTMP. The protein operates within pyrimidine metabolism; dTTP biosynthesis. Its function is as follows. Catalyzes the reductive methylation of 2'-deoxyuridine-5'-monophosphate (dUMP) to 2'-deoxythymidine-5'-monophosphate (dTMP) while utilizing 5,10-methylenetetrahydrofolate (mTHF) as the methyl donor and reductant in the reaction, yielding dihydrofolate (DHF) as a by-product. This enzymatic reaction provides an intracellular de novo source of dTMP, an essential precursor for DNA biosynthesis. The sequence is that of Thymidylate synthase from Ruthia magnifica subsp. Calyptogena magnifica.